The sequence spans 126 residues: Small ribosomal subunit protein uS13 (126 aa).

Residues 95-126 (GLPVRGQRTQTNARTRKGKKKTVAGKKKAGRK) form a disordered region. Over residues 108–126 (RTRKGKKKTVAGKKKAGRK) the composition is skewed to basic residues.

Belongs to the universal ribosomal protein uS13 family. Part of the 30S ribosomal subunit. Forms a loose heterodimer with protein S19. Forms two bridges to the 50S subunit in the 70S ribosome.

Its function is as follows. Located at the top of the head of the 30S subunit, it contacts several helices of the 16S rRNA. In the 70S ribosome it contacts the 23S rRNA (bridge B1a) and protein L5 of the 50S subunit (bridge B1b), connecting the 2 subunits; these bridges are implicated in subunit movement. Contacts the tRNAs in the A and P-sites. The chain is Small ribosomal subunit protein uS13 from Thermobifida fusca (strain YX).